We begin with the raw amino-acid sequence, 366 residues long: Aminomethyltransferase (366 aa).

The protein belongs to the GcvT family. In terms of assembly, the glycine cleavage system is composed of four proteins: P, T, L and H.

It carries out the reaction N(6)-[(R)-S(8)-aminomethyldihydrolipoyl]-L-lysyl-[protein] + (6S)-5,6,7,8-tetrahydrofolate = N(6)-[(R)-dihydrolipoyl]-L-lysyl-[protein] + (6R)-5,10-methylene-5,6,7,8-tetrahydrofolate + NH4(+). In terms of biological role, the glycine cleavage system catalyzes the degradation of glycine. This Bacillus mycoides (strain KBAB4) (Bacillus weihenstephanensis) protein is Aminomethyltransferase.